The sequence spans 179 residues: Large ribosomal subunit protein uL6c (179 aa).

Belongs to the universal ribosomal protein uL6 family. Part of the 50S ribosomal subunit.

It localises to the plastid. It is found in the chloroplast. In terms of biological role, binds 23S rRNA. The sequence is that of Large ribosomal subunit protein uL6c (rpl6) from Guillardia theta (Cryptophyte).